The primary structure comprises 417 residues: Imidazolonepropionase (417 aa).

The Fe(3+) site is built by His77 and His79. Residues His77 and His79 each coordinate Zn(2+). Residues Arg86, Tyr149, and His182 each coordinate 4-imidazolone-5-propanoate. Tyr149 serves as a coordination point for N-formimidoyl-L-glutamate. Fe(3+) is bound at residue His244. His244 is a Zn(2+) binding site. Glu247 provides a ligand contact to 4-imidazolone-5-propanoate. Position 323 (Asp323) interacts with Fe(3+). A Zn(2+)-binding site is contributed by Asp323. Asn325 serves as a coordination point for N-formimidoyl-L-glutamate.

It belongs to the metallo-dependent hydrolases superfamily. HutI family. Zn(2+) is required as a cofactor. Fe(3+) serves as cofactor.

It localises to the cytoplasm. It catalyses the reaction 4-imidazolone-5-propanoate + H2O = N-formimidoyl-L-glutamate. Its pathway is amino-acid degradation; L-histidine degradation into L-glutamate; N-formimidoyl-L-glutamate from L-histidine: step 3/3. Its function is as follows. Catalyzes the hydrolytic cleavage of the carbon-nitrogen bond in imidazolone-5-propanoate to yield N-formimidoyl-L-glutamate. It is the third step in the universal histidine degradation pathway. This is Imidazolonepropionase from Halobacterium salinarum (strain ATCC 29341 / DSM 671 / R1).